A 191-amino-acid chain; its full sequence is RRP15-like protein (191 aa).

Residues 1-11 (MSTKNRDRLVV) are compositionally biased toward basic and acidic residues. A disordered region spans residues 1–52 (MSTKNRDRLVVTEDSDDDNEREEMSSGGESGEEGPSSVDGGAGDADETVAFP). A coiled-coil region spans residues 53-84 (AIERRKKKVIKKLTKKEQSLKKSVKEYRIKLA). Over residues 119–153 (QKTMSDAVKEKMTARERREARQRFDGKNFDSDRFA) the composition is skewed to basic and acidic residues. Residues 119 to 191 (QKTMSDAVKE…IDTGNYSDED (73 aa)) form a disordered region. Positions 166 to 191 (GEDDDGEDQMDIGEEQIDTGNYSDED) are enriched in acidic residues.

This sequence belongs to the RRP15 family.

The sequence is that of RRP15-like protein from Caenorhabditis elegans.